The sequence spans 588 residues: Synaptotagmin-3 (588 aa).

Topologically, residues 1–54 are vesicular; the sequence is MSGDYEDDLCRRALILVSDLCARIRDADTNDRCQEFNELRIRGYPRGPDADISV. The segment at 10–34 is cysteine motif; it reads CRRALILVSDLCARIRDADTNDRCQ. A helical transmembrane segment spans residues 55 to 75; the sequence is SLLSVIVTFCGIVLLGVSLFV. Topologically, residues 76-588 are cytoplasmic; that stretch reads SWKLCWVPWR…KGLSEKENSE (513 aa). 3 disordered regions span residues 129–161, 183–222, and 238–257; these read GGPHHHAHPAHHPPFAELLEPGGLGGSEPPEPS, PSQTSPELPSEGGTGSGLLLLPPSGGGLPSAQSHQQVTSL, and QTLTTQADPSSEERPPALPL. A compositionally biased stretch (low complexity) spans 183–205; that stretch reads PSQTSPELPSEGGTGSGLLLLPP. Residues 213 to 222 are compositionally biased toward polar residues; that stretch reads AQSHQQVTSL. Arg286 is modified (omega-N-methylarginine). C2 domains lie at 297 to 418 and 429 to 563; these read PCGR…PLWR and DLGE…EHWH. Ca(2+) contacts are provided by Asp328, Asp334, Asp386, Phe387, Asp388, Ser391, Asp394, Asp460, Asp466, Asp520, and Asp522.

This sequence belongs to the synaptotagmin family. As to quaternary structure, homodimer; disulfide-linked via the cysteine motif. Can also form heterodimers with SYT6, SYT9 and SYT10. Ca(2+) is required as a cofactor. In terms of tissue distribution, brain, various endocrine tissues and hormone-secreting clonal cells.

It localises to the cell membrane. The protein localises to the cytoplasmic vesicle. Its subcellular location is the secretory vesicle membrane. Functionally, ca(2+) sensor involved in Ca(2+)-dependent exocytosis of secretory vesicles through Ca(2+) and phospholipid binding to the C2 domain. Ca(2+) induces binding of the C2-domains to phospholipid membranes and to assembled SNARE-complexes; both actions contribute to triggering exocytosis. Plays a role in dendrite formation by melanocytes. In Rattus norvegicus (Rat), this protein is Synaptotagmin-3 (Syt3).